We begin with the raw amino-acid sequence, 528 residues long: Carboxysome shell carbonic anhydrase (528 aa).

Residues 17–47 are disordered; it reads PIAPNPRWQKENPTAHGSTDTGGFGYNGGNE. Residue C184 coordinates Zn(2+). Catalysis depends on D186, which acts as the Proton acceptor. Zn(2+) contacts are provided by H252 and C263.

It belongs to the beta-class carbonic anhydrase family. CsoSCA subfamily. As to quaternary structure, homodimer. Requires Zn(2+) as cofactor.

Its subcellular location is the carboxysome. The catalysed reaction is hydrogencarbonate + H(+) = CO2 + H2O. With respect to regulation, inhibited by ethoxyzolamide and dithiothreitol (in crude extracts upon expression in E.coli). Functionally, reversible hydration of carbon dioxide. This bacteria encodes at least 3 CA enzymes. Essential for chemolithotrophic carbon dioxide fixation, supplies CO(2) to RuBisCO (ribulose bisphosphate carboxylase, cbbL-cbbS) in the carboxysome. This chain is Carboxysome shell carbonic anhydrase, found in Hydrogenovibrio crunogenus (strain DSM 25203 / XCL-2) (Thiomicrospira crunogena).